Here is a 1393-residue protein sequence, read N- to C-terminus: Polarized growth protein RAX2 (1393 aa).

Residues 1–21 (MLVQFQQLLLLLISIIKLCQA) form the signal peptide. The Extracellular portion of the chain corresponds to 22–1329 (DDNDNSFFQP…TNKNLSRGKV (1308 aa)). 48 N-linked (GlcNAc...) asparagine glycosylation sites follow: N62, N85, N105, N125, N133, N139, N164, N186, N195, N212, N256, N260, N266, N269, N362, N398, N405, N479, N536, N542, N565, N599, N646, N649, N653, N674, N689, N696, N702, N714, N747, N764, N768, N792, N829, N863, N899, N935, N946, N958, N985, N1020, N1030, N1041, N1213, N1232, N1262, and N1323. The chain crosses the membrane as a helical span at residues 1330–1350 (VGISLACALGSTTLLGLLYII). Residues 1351-1393 (PYFALFKNRKDGYFQPERIHEDEMMDAVNPEDLLHEIDLQREK) lie on the Cytoplasmic side of the membrane.

Belongs to the RAX2 family.

The protein resides in the cell membrane. It localises to the cell tip. Functionally, required for establishing sites of emergence of yeast and hyphal daughters and for maintaining the linearity of hyphal growth, but not involved in responses that require a reorientation of the direction of already established hyphal growth (tropisms). Does not play a role in penetration or injury of human epithelial cells. This chain is Polarized growth protein RAX2, found in Candida albicans (strain SC5314 / ATCC MYA-2876) (Yeast).